The sequence spans 421 residues: Serine--tRNA ligase (421 aa).

231-233 is a binding site for L-serine; sequence TAE. 262 to 264 is a binding site for ATP; it reads RRE. Residue Glu-285 participates in L-serine binding. Residue 349–352 coordinates ATP; it reads EISS. Position 384 (Ser-384) interacts with L-serine.

Belongs to the class-II aminoacyl-tRNA synthetase family. Type-1 seryl-tRNA synthetase subfamily. As to quaternary structure, homodimer. The tRNA molecule binds across the dimer.

The protein resides in the cytoplasm. The catalysed reaction is tRNA(Ser) + L-serine + ATP = L-seryl-tRNA(Ser) + AMP + diphosphate + H(+). The enzyme catalyses tRNA(Sec) + L-serine + ATP = L-seryl-tRNA(Sec) + AMP + diphosphate + H(+). Its pathway is aminoacyl-tRNA biosynthesis; selenocysteinyl-tRNA(Sec) biosynthesis; L-seryl-tRNA(Sec) from L-serine and tRNA(Sec): step 1/1. In terms of biological role, catalyzes the attachment of serine to tRNA(Ser). Is also able to aminoacylate tRNA(Sec) with serine, to form the misacylated tRNA L-seryl-tRNA(Sec), which will be further converted into selenocysteinyl-tRNA(Sec). The protein is Serine--tRNA ligase of Hydrogenobaculum sp. (strain Y04AAS1).